The chain runs to 247 residues: Granzyme B(G,H) (247 aa).

The N-terminal stretch at 1 to 18 is a signal peptide; it reads MKILLLLLTLSLASRTKA. Residues 19–20 constitute a propeptide, activation peptide; the sequence is GE. Residues 21–245 enclose the Peptidase S1 domain; sequence IIGGHEVKPH…FLSWIKKTMK (225 aa). Cys-49 and Cys-65 are disulfide-bonded. His-64 acts as the Charge relay system in catalysis. The N-linked (GlcNAc...) asparagine glycan is linked to Asn-71. The active-site Charge relay system is the Asp-108. 2 disulfides stabilise this stretch: Cys-142–Cys-209 and Cys-173–Cys-188. Asn-182 carries N-linked (GlcNAc...) asparagine glycosylation. Catalysis depends on Ser-203, which acts as the Charge relay system.

The protein belongs to the peptidase S1 family. Granzyme subfamily.

It localises to the secreted. The protein resides in the cytolytic granule. The enzyme catalyses Preferential cleavage: -Asp-|-Xaa- &gt;&gt; -Asn-|-Xaa- &gt; -Met-|-Xaa-, -Ser-|-Xaa-.. Its activity is regulated as follows. Inactivated by the serine protease inhibitor diisopropylfluorophosphate. Functionally, abundant protease in the cytosolic granules of cytotoxic T-cells and NK-cells which activates caspase-independent pyroptosis when delivered into the target cell through the immunological synapse. It cleaves after Asp. Once delivered into the target cell, acts by catalyzing cleavage of gasdermin-E (GSDME), releasing the pore-forming moiety of GSDME, thereby triggering pyroptosis and target cell death. Seems to be linked to an activation cascade of caspases (aspartate-specific cysteine proteases) responsible for apoptosis execution. Cleaves caspase-3 and -9 (CASP3 and CASP9, respectively) to give rise to active enzymes mediating apoptosis. Cleaves and activates CASP7 in response to bacterial infection, promoting plasma membrane repair. The protein is Granzyme B(G,H) (Gzmb) of Mus musculus (Mouse).